The sequence spans 637 residues: Neuroendocrine convertase 2 (637 aa).

The N-terminal stretch at 1–24 (MEGGCGSQWKAAGFLFCVMVFASA) is a signal peptide. The propeptide occupies 25–108 (ERPVFTNHFL…QQEGFDRKKR (84 aa)). Residues 128–452 (QWYLFNTGQA…YGVLDAGAMV (325 aa)) enclose the Peptidase S8 domain. Active-site charge relay system residues include Asp166 and His207. Cystine bridges form between Cys224–Cys375 and Cys316–Cys346. N-linked (GlcNAc...) asparagine glycosylation occurs at Asn374. Ser383 (charge relay system) is an active-site residue. The region spanning 460–596 (TVPERFHCVG…TLMLHGTQSA (137 aa)) is the P/Homo B domain. A disulfide bond links Cys467 and Cys493. Asn513 and Asn523 each carry an N-linked (GlcNAc...) asparagine glycan.

Belongs to the peptidase S8 family. Furin subfamily.

The protein localises to the cytoplasmic vesicle. The protein resides in the secretory vesicle. It is found in the secreted. The catalysed reaction is Release of protein hormones and neuropeptides from their precursors, generally by hydrolysis of -Lys-Arg-|- bonds.. Serine endopeptidase which is involved in the processing of hormone and other protein precursors at sites comprised of pairs of basic amino acid residues. Responsible for the release of glucagon from proglucagon in pancreatic A cells. This is Neuroendocrine convertase 2 (Pcsk2) from Mus musculus (Mouse).